Reading from the N-terminus, the 131-residue chain is UPF0102 protein YraN (131 aa).

Over residues 1-19 (MATVPTRSGSPRQLTTKQT) the composition is skewed to polar residues. The interval 1–20 (MATVPTRSGSPRQLTTKQTG) is disordered.

This sequence belongs to the UPF0102 family.

This Escherichia coli O8 (strain IAI1) protein is UPF0102 protein YraN.